We begin with the raw amino-acid sequence, 113 residues long: Small ribosomal subunit protein bS6 (113 aa).

The protein belongs to the bacterial ribosomal protein bS6 family.

Binds together with bS18 to 16S ribosomal RNA. This Buchnera aphidicola subsp. Schizaphis graminum (strain Sg) protein is Small ribosomal subunit protein bS6.